Reading from the N-terminus, the 157-residue chain is MSSIVDDGISFRPLDIDDFDKGYSECLQQLTEAKFTKEQFIERFNQIKKQSDTYFLIVAVDVKLNKIIACGSLFVEKKFIRNCGKCGHIEDIVVNNNYRGKNLGLRIIEQLKCIGSQAGCYKIILDCSEANVKFYEKCKFERKGVQMSIYLPTPPKL.

The region spanning 9 to 157 (ISFRPLDIDD…SIYLPTPPKL (149 aa)) is the N-acetyltransferase domain. Residues Thr-31, 78–81 (KFIR), and 90–92 (EDI) each bind substrate. 100–105 (GKNLGL) contributes to the acetyl-CoA binding site. 121–122 (YK) contacts substrate. Position 135-137 (135-137 (YEK)) interacts with acetyl-CoA.

This sequence belongs to the acetyltransferase family. GNA1 subfamily.

The enzyme catalyses D-glucosamine 6-phosphate + acetyl-CoA = N-acetyl-D-glucosamine 6-phosphate + CoA + H(+). It functions in the pathway nucleotide-sugar biosynthesis; UDP-N-acetyl-alpha-D-glucosamine biosynthesis; N-acetyl-alpha-D-glucosamine 1-phosphate from alpha-D-glucosamine 6-phosphate (route I): step 1/2. The chain is Glucosamine 6-phosphate N-acetyltransferase 1 (gna1) from Dictyostelium discoideum (Social amoeba).